We begin with the raw amino-acid sequence, 360 residues long: Phospho-N-acetylmuramoyl-pentapeptide-transferase (360 aa).

The next 10 helical transmembrane spans lie at 27–47 (IVGL…LIAW), 71–91 (TPTM…LLWA), 97–117 (YVWC…IDDY), 132–152 (WKYF…YAIG), 168–188 (VMPQ…VGTS), 199–219 (GLAI…AWAT), 236–256 (AGEL…FLWF), 263–283 (VFMG…IAVL), 288–308 (FLLV…ILQV), and 338–358 (VIVR…ATLK).

This sequence belongs to the glycosyltransferase 4 family. MraY subfamily. Mg(2+) serves as cofactor.

The protein localises to the cell inner membrane. It carries out the reaction UDP-N-acetyl-alpha-D-muramoyl-L-alanyl-gamma-D-glutamyl-meso-2,6-diaminopimeloyl-D-alanyl-D-alanine + di-trans,octa-cis-undecaprenyl phosphate = di-trans,octa-cis-undecaprenyl diphospho-N-acetyl-alpha-D-muramoyl-L-alanyl-D-glutamyl-meso-2,6-diaminopimeloyl-D-alanyl-D-alanine + UMP. Its pathway is cell wall biogenesis; peptidoglycan biosynthesis. Functionally, catalyzes the initial step of the lipid cycle reactions in the biosynthesis of the cell wall peptidoglycan: transfers peptidoglycan precursor phospho-MurNAc-pentapeptide from UDP-MurNAc-pentapeptide onto the lipid carrier undecaprenyl phosphate, yielding undecaprenyl-pyrophosphoryl-MurNAc-pentapeptide, known as lipid I. The sequence is that of Phospho-N-acetylmuramoyl-pentapeptide-transferase from Proteus mirabilis (strain HI4320).